A 1024-amino-acid polypeptide reads, in one-letter code: Error-prone DNA polymerase (1024 aa).

Belongs to the DNA polymerase type-C family. DnaE2 subfamily.

It is found in the cytoplasm. The enzyme catalyses DNA(n) + a 2'-deoxyribonucleoside 5'-triphosphate = DNA(n+1) + diphosphate. DNA polymerase involved in damage-induced mutagenesis and translesion synthesis (TLS). It is not the major replicative DNA polymerase. In Vibrio campbellii (strain ATCC BAA-1116), this protein is Error-prone DNA polymerase.